The following is a 293-amino-acid chain: Undecaprenyl-diphosphatase (293 aa).

5 helical membrane passes run 107–127 (WMII…KDLI), 134–154 (MWIT…AEKV), 207–227 (FSFL…LPDA), 243–263 (IGTL…MKFV), and 268–288 (FSWF…LLWL).

This sequence belongs to the UppP family.

It is found in the cell membrane. It catalyses the reaction di-trans,octa-cis-undecaprenyl diphosphate + H2O = di-trans,octa-cis-undecaprenyl phosphate + phosphate + H(+). Catalyzes the dephosphorylation of undecaprenyl diphosphate (UPP). Confers resistance to bacitracin. The sequence is that of Undecaprenyl-diphosphatase from Corynebacterium efficiens (strain DSM 44549 / YS-314 / AJ 12310 / JCM 11189 / NBRC 100395).